Reading from the N-terminus, the 537-residue chain is Beta-arabinofuranosyltransferase RAY1 (537 aa).

The DXD motif motif lies at 370-372 (DVD).

This sequence belongs to the glycosyltransferase 77 family.

Its function is as follows. Beta-arabinofuranosyltransferase that transfers specifically an arabinosyl residue from UDP-arabinofuranose to the monosaccharide galactose or beta-methyl-galactoside in vitro. Catalyzes the addition of a beta-arabinofuranose residue onto a beta-galactosyl residue of an Yariv-precipitable wall polymer in vivo. The protein is Beta-arabinofuranosyltransferase RAY1 of Arabidopsis thaliana (Mouse-ear cress).